Reading from the N-terminus, the 608-residue chain is Chaperone protein DnaK (608 aa).

Position 174 is a phosphothreonine; by autocatalysis (Thr-174). Residues 493–505 show a composition bias toward basic and acidic residues; it reads YEEEDRKRKESAE. 2 disordered regions span residues 493-514 and 577-608; these read YEEE…DSMV and GQAA…DDDK. Over residues 577–590 the composition is skewed to low complexity; that stretch reads GQAAGANPGAQTTG. Basic and acidic residues predominate over residues 599–608; that stretch reads AEYKVVDDDK.

This sequence belongs to the heat shock protein 70 family.

Acts as a chaperone. This chain is Chaperone protein DnaK, found in Acetivibrio thermocellus (strain ATCC 27405 / DSM 1237 / JCM 9322 / NBRC 103400 / NCIMB 10682 / NRRL B-4536 / VPI 7372) (Clostridium thermocellum).